The primary structure comprises 185 residues: Peptide deformylase (185 aa).

2 residues coordinate Fe cation: cysteine 98 and histidine 140. Glutamate 141 is an active-site residue. Residue histidine 144 coordinates Fe cation.

This sequence belongs to the polypeptide deformylase family. It depends on Fe(2+) as a cofactor.

It carries out the reaction N-terminal N-formyl-L-methionyl-[peptide] + H2O = N-terminal L-methionyl-[peptide] + formate. Its function is as follows. Removes the formyl group from the N-terminal Met of newly synthesized proteins. Requires at least a dipeptide for an efficient rate of reaction. N-terminal L-methionine is a prerequisite for activity but the enzyme has broad specificity at other positions. This chain is Peptide deformylase, found in Parabacteroides distasonis (strain ATCC 8503 / DSM 20701 / CIP 104284 / JCM 5825 / NCTC 11152).